Consider the following 480-residue polypeptide: Cytochrome b-c1 complex subunit 1, mitochondrial (480 aa).

The N-terminal 34 residues, 1–34 (MAASVVCRAATAGAQVLLRARRSPALLRTPALRS), are a transit peptide targeting the mitochondrion. N6-acetyllysine is present on residues Lys-111 and Lys-138. Residue Lys-163 is modified to N6-acetyllysine; alternate. N6-succinyllysine; alternate is present on Lys-163. Ser-212 is subject to Phosphoserine. Position 248 is an N6-acetyllysine (Lys-248).

The protein belongs to the peptidase M16 family. UQCRC1/QCR1 subfamily. Component of the ubiquinol-cytochrome c oxidoreductase (cytochrome b-c1 complex, complex III, CIII), a multisubunit enzyme composed of 11 subunits. The complex is composed of 3 respiratory subunits cytochrome b, cytochrome c1 and Rieske protein UQCRFS1, 2 core protein subunits UQCRC1/QCR1 and UQCRC2/QCR2, and 6 low-molecular weight protein subunits UQCRH/QCR6, UQCRB/QCR7, UQCRQ/QCR8, UQCR10/QCR9, UQCR11/QCR10 and subunit 9, the cleavage product of Rieske protein UQCRFS1. The complex exists as an obligatory dimer and forms supercomplexes (SCs) in the inner mitochondrial membrane with NADH-ubiquinone oxidoreductase (complex I, CI) and cytochrome c oxidase (complex IV, CIV), resulting in different assemblies (supercomplex SCI(1)III(2)IV(1) and megacomplex MCI(2)III(2)IV(2)). Interacts with UQCC6. Interacts with STMP1. Expressed in brain, including substantia nigra, striatum, cortex and cerebellum, and in spinal cord, heart, kidney, liver and muscle.

It localises to the mitochondrion inner membrane. Its function is as follows. Component of the ubiquinol-cytochrome c oxidoreductase, a multisubunit transmembrane complex that is part of the mitochondrial electron transport chain which drives oxidative phosphorylation. The respiratory chain contains 3 multisubunit complexes succinate dehydrogenase (complex II, CII), ubiquinol-cytochrome c oxidoreductase (cytochrome b-c1 complex, complex III, CIII) and cytochrome c oxidase (complex IV, CIV), that cooperate to transfer electrons derived from NADH and succinate to molecular oxygen, creating an electrochemical gradient over the inner membrane that drives transmembrane transport and the ATP synthase. The cytochrome b-c1 complex catalyzes electron transfer from ubiquinol to cytochrome c, linking this redox reaction to translocation of protons across the mitochondrial inner membrane, with protons being carried across the membrane as hydrogens on the quinol. In the process called Q cycle, 2 protons are consumed from the matrix, 4 protons are released into the intermembrane space and 2 electrons are passed to cytochrome c. The 2 core subunits UQCRC1/QCR1 and UQCRC2/QCR2 are homologous to the 2 mitochondrial-processing peptidase (MPP) subunits beta-MPP and alpha-MPP respectively, and they seem to have preserved their MPP processing properties. May be involved in the in situ processing of UQCRFS1 into the mature Rieske protein and its mitochondrial targeting sequence (MTS)/subunit 9 when incorporated into complex III. Seems to play an important role in the maintenance of proper mitochondrial function in nigral dopaminergic neurons. The sequence is that of Cytochrome b-c1 complex subunit 1, mitochondrial (UQCRC1) from Homo sapiens (Human).